We begin with the raw amino-acid sequence, 218 residues long: Small ribosomal subunit protein uS3 (218 aa).

Residues 38–106 form the KH type-2 domain; it reads IRKYIESKLA…RVHINIVEIK (69 aa).

Belongs to the universal ribosomal protein uS3 family. Part of the 30S ribosomal subunit. Forms a tight complex with proteins S10 and S14.

In terms of biological role, binds the lower part of the 30S subunit head. Binds mRNA in the 70S ribosome, positioning it for translation. The polypeptide is Small ribosomal subunit protein uS3 (Ligilactobacillus salivarius (strain UCC118) (Lactobacillus salivarius)).